The sequence spans 415 residues: Gamma-glutamyl phosphate reductase (415 aa).

This sequence belongs to the gamma-glutamyl phosphate reductase family.

The protein resides in the cytoplasm. The catalysed reaction is L-glutamate 5-semialdehyde + phosphate + NADP(+) = L-glutamyl 5-phosphate + NADPH + H(+). It participates in amino-acid biosynthesis; L-proline biosynthesis; L-glutamate 5-semialdehyde from L-glutamate: step 2/2. In terms of biological role, catalyzes the NADPH-dependent reduction of L-glutamate 5-phosphate into L-glutamate 5-semialdehyde and phosphate. The product spontaneously undergoes cyclization to form 1-pyrroline-5-carboxylate. This Bacillus cereus (strain 03BB102) protein is Gamma-glutamyl phosphate reductase.